We begin with the raw amino-acid sequence, 52 residues long: Stable plasmid inheritance protein (52 aa).

The helical transmembrane segment at 6–26 threads the bilayer; that stretch reads SSLVWCVLIVCLTLLIFTYLT.

Belongs to the Hok/Gef family.

The protein resides in the cell inner membrane. In terms of biological role, toxic component of a type I toxin-antitoxin (TA) system. Part of the plasmid maintenance system, encodes a toxic protein that collapses the transmembrane potential and arrests respiration. When the adjacent non-translated flmB (sok) gene is disrupted FlmA no longer functions in plasmid maintenance (i.e. FlmB probably encodes an antisense antitoxin RNA). Translation of FlmA may be coupled to the upstream flmC gene. The sequence is that of Stable plasmid inheritance protein (flmA) from Escherichia coli O157:H7.